Here is a 23-residue protein sequence, read N- to C-terminus: Conotoxin Tx6.5 (23 aa).

3 disulfide bridges follow: cysteine 2/cysteine 10, cysteine 5/cysteine 15, and cysteine 9/cysteine 20. Proline 12 bears the 4-hydroxyproline; partial mark.

The protein belongs to the conotoxin U superfamily. In terms of tissue distribution, expressed by the venom duct.

Its subcellular location is the secreted. The chain is Conotoxin Tx6.5 from Conus textile (Cloth-of-gold cone).